The chain runs to 321 residues: Leucine-rich repeat-containing protein 46 (321 aa).

LRR repeat units lie at residues 45–66 (ELQT…EGLK), 67–88 (NLHS…ACVP), 89–110 (SLRF…LDLP), and 111–132 (CLQF…EFPQ). The LRRCT domain maps to 142 to 184 (NSCTNQDSYRELVIEALPLLLDLDGQPVMERWISDEEDEASSE). A phosphoserine mark is found at Ser-175 and Ser-182. Residues 198–222 (RGFLKELEQELSRHREHRQQAALTQ) are a coiled coil. Residues 235 to 321 (NLPLLPGVPM…TKTMAKRSKK (87 aa)) form a disordered region.

The protein localises to the cell projection. It localises to the cilium. Its subcellular location is the flagellum. Required for normal spermatogenesis and male fertility. Plays an important role in sperm flagellum biogenesis. The protein is Leucine-rich repeat-containing protein 46 (LRRC46) of Macaca fascicularis (Crab-eating macaque).